The primary structure comprises 132 residues: Large ribosomal subunit protein bL12 (132 aa).

Residues 112-132 (KEAADKAKTQLEGAGGTINLK) are disordered.

It belongs to the bacterial ribosomal protein bL12 family. As to quaternary structure, homodimer. Part of the ribosomal stalk of the 50S ribosomal subunit. Forms a multimeric L10(L12)X complex, where L10 forms an elongated spine to which 2 to 4 L12 dimers bind in a sequential fashion. Binds GTP-bound translation factors.

In terms of biological role, forms part of the ribosomal stalk which helps the ribosome interact with GTP-bound translation factors. Is thus essential for accurate translation. The protein is Large ribosomal subunit protein bL12 of Leifsonia xyli subsp. xyli (strain CTCB07).